Here is a 146-residue protein sequence, read N- to C-terminus: 3-hydroxyacyl-[acyl-carrier-protein] dehydratase FabZ (146 aa).

Residue H51 is part of the active site.

The protein belongs to the thioester dehydratase family. FabZ subfamily.

Its subcellular location is the cytoplasm. The catalysed reaction is a (3R)-hydroxyacyl-[ACP] = a (2E)-enoyl-[ACP] + H2O. Its function is as follows. Involved in unsaturated fatty acids biosynthesis. Catalyzes the dehydration of short chain beta-hydroxyacyl-ACPs and long chain saturated and unsaturated beta-hydroxyacyl-ACPs. This chain is 3-hydroxyacyl-[acyl-carrier-protein] dehydratase FabZ, found in Staphylococcus aureus (strain Mu3 / ATCC 700698).